A 118-amino-acid chain; its full sequence is Thioredoxin H3 (118 aa).

A2 is modified (N-acetylalanine). Residues 2–113 (AAEGEVIACH…IIANLEKHKT (112 aa)) form the Thioredoxin domain. Catalysis depends on nucleophile residues C39 and C42. A disulfide bridge links C39 with C42.

It belongs to the thioredoxin family. Plant H-type subfamily. As to quaternary structure, interacts with FBA5 and FBA8. Interacts with FBA6. Interacts with MDH1.

It is found in the cytoplasm. Functionally, thiol-disulfide oxidoreductase that possesses disulfide reductase and insulin disulfide bonds reducing activities. Heat shock causes oligomerization and formation of high molecular weight (HMW) complexes with concomitant functional switching from a disulfide reductase to chaperone. The protein is Thioredoxin H3 (TRX3) of Arabidopsis thaliana (Mouse-ear cress).